The sequence spans 323 residues: Glyoxylate/hydroxypyruvate reductase B (323 aa).

Residues Arg-237 and Glu-266 contribute to the active site. Residue His-285 is the Proton donor of the active site.

The protein belongs to the D-isomer specific 2-hydroxyacid dehydrogenase family. GhrB subfamily. Homodimer.

The protein localises to the cytoplasm. It catalyses the reaction glycolate + NADP(+) = glyoxylate + NADPH + H(+). The enzyme catalyses (R)-glycerate + NAD(+) = 3-hydroxypyruvate + NADH + H(+). The catalysed reaction is (R)-glycerate + NADP(+) = 3-hydroxypyruvate + NADPH + H(+). Its function is as follows. Catalyzes the NADPH-dependent reduction of glyoxylate and hydroxypyruvate into glycolate and glycerate, respectively. This is Glyoxylate/hydroxypyruvate reductase B from Klebsiella pneumoniae subsp. pneumoniae (strain ATCC 700721 / MGH 78578).